We begin with the raw amino-acid sequence, 3901 residues long: Nonribosomal peptide synthetase opaA (3901 aa).

Residues 248-641 (HNAQHHPSVV…HRKDNQIKIR (394 aa)) form an adenylation 1 region. The Carrier 1 domain maps to 780 to 854 (LPVTANEIVV…DMATRLTRIK (75 aa)). S815 carries the O-(pantetheine 4'-phosphoryl)serine modification. Residues 891–1164 (DAYPCSALQE…IATVPIRINL (274 aa)) form a condensation 1 region. The segment at 1328-1725 (QSHAQKTPKS…GRIGNQVKLR (398 aa)) is adenylation 2. One can recognise a Carrier 2 domain in the interval 1858-1936 (RTPLDTERDL…QIAAQAATRA (79 aa)). The residue at position 1895 (S1895) is an O-(pantetheine 4'-phosphoryl)serine. The segment at 1953–2261 (KLTPIQQLFF…KDARRRLTRN (309 aa)) is epimerase. The segment at 2403–2826 (ENLYPCAPIQ…LVSTDHKRLL (424 aa)) is condensation 2. The tract at residues 2846-3243 (QQHVRETPDA…GRKDSQIKIR (398 aa)) is adenylation 3. One can recognise a Carrier 3 domain in the interval 3375-3451 (LPSTAGEQLL…ALAARSRSKD (77 aa)). The residue at position 3412 (S3412) is an O-(pantetheine 4'-phosphoryl)serine. A condensation 3 region spans residues 3509–3837 (HHFSFAVEGK…EDLKTHFTLN (329 aa)).

The protein belongs to the NRP synthetase family.

In terms of biological role, nonribosomal peptide synthetase; part of the gene cluster that mediates the biosynthesis of oxepinamides, derivatives of anthranilyl-containing tripeptides that share an oxepin ring and a fused pyrimidinone moiety. The nonribosomal peptide synthetase (NRPS) opaA assembles the quinazolinone core with D-Phe incorporation. The first adenylation domain (A1) of opaA loads and activates anthranilic acid whereas the second A domain (A2) is for activating of L-Phe, which is then converted to D-form by the E domain. The third A domain (A3) is responsible for L-Ile activation and the terminal condensation domain C3 for cyclization and releasing the NRPS product protuboxepin K. The cytochrome P450 monooxygenase opaB then catalyzes alone the oxepin ring formation to convert protuboxepin K into protuboxepin A. The flavoenzyme opaC installs subsequently one hydroxyl group at the oxepin ring, accompanied by double bond migration, to form 15-epi-oxepinamide E. The epimerase opaE changes the D-Phe residue back to L-form, leading to oxepinamide E, which is further methylated at the hydroxyl group at C-12 by the O-methyltransferase OpaF to yield oxepinamide F. The sequence is that of Nonribosomal peptide synthetase opaA from Aspergillus ustus.